We begin with the raw amino-acid sequence, 150 residues long: UPF0756 membrane protein NT05HA_0561 (150 aa).

The next 4 helical transmembrane spans lie at 1 to 21 (MSLQFNMIALLLVILILLGIF), 52 to 72 (YGLSIGIVILTIGVLSPLVSG), 81 to 101 (AFVSWKMFVAIAVGVFVAWLA), and 128 to 148 (FLGGIPVGPLIAAGILAVLIG).

Belongs to the UPF0756 family.

It is found in the cell membrane. The sequence is that of UPF0756 membrane protein NT05HA_0561 from Aggregatibacter aphrophilus (strain NJ8700) (Haemophilus aphrophilus).